The sequence spans 171 residues: Secretion monitor (171 aa).

Positions 1–30 (MIGILNRWRQFGRRYFWPHLLLGMVAASLG) are cleaved as a signal peptide.

Belongs to the SecM family.

The protein resides in the cytoplasm. Its subcellular location is the cytosol. It localises to the periplasm. In terms of biological role, regulates secA expression by translational coupling of the secM secA operon. Translational pausing at a specific Pro residue 5 residues before the end of the protein may allow disruption of a mRNA repressor helix that normally suppresses secA translation initiation. This is Secretion monitor from Pectobacterium atrosepticum (strain SCRI 1043 / ATCC BAA-672) (Erwinia carotovora subsp. atroseptica).